A 671-amino-acid polypeptide reads, in one-letter code: Archaeal Rqc2 homolog aRqcH (671 aa).

Coiled-coil stretches lie at residues 291 to 363 (KVVV…ARIK) and 410 to 465 (RKNA…MQMK).

Belongs to the NEMF family. As to quaternary structure, associates with stalled 50S ribosomal subunits.

Functionally, probably part of the ribosome quality control system (RQC). May mediate the addition of alanine residues (Ala tailing) to incompletely synthesized nascent chains from stalled ribosomes, leading to their degradation. In Methanocaldococcus jannaschii (strain ATCC 43067 / DSM 2661 / JAL-1 / JCM 10045 / NBRC 100440) (Methanococcus jannaschii), this protein is Archaeal Rqc2 homolog aRqcH.